We begin with the raw amino-acid sequence, 141 residues long: 3-hydroxyacyl-[acyl-carrier-protein] dehydratase FabZ (141 aa).

His49 is a catalytic residue.

The protein belongs to the thioester dehydratase family. FabZ subfamily.

The protein resides in the cytoplasm. The enzyme catalyses a (3R)-hydroxyacyl-[ACP] = a (2E)-enoyl-[ACP] + H2O. Its function is as follows. Involved in unsaturated fatty acids biosynthesis. Catalyzes the dehydration of short chain beta-hydroxyacyl-ACPs and long chain saturated and unsaturated beta-hydroxyacyl-ACPs. The polypeptide is 3-hydroxyacyl-[acyl-carrier-protein] dehydratase FabZ (fabZ2) (Enterococcus faecalis (strain ATCC 700802 / V583)).